We begin with the raw amino-acid sequence, 289 residues long: Acetylglutamate kinase (289 aa).

Substrate contacts are provided by residues 60 to 61 (GG), R82, and N186.

It belongs to the acetylglutamate kinase family. ArgB subfamily.

The protein resides in the cytoplasm. The catalysed reaction is N-acetyl-L-glutamate + ATP = N-acetyl-L-glutamyl 5-phosphate + ADP. Its pathway is amino-acid biosynthesis; L-arginine biosynthesis; N(2)-acetyl-L-ornithine from L-glutamate: step 2/4. Its function is as follows. Catalyzes the ATP-dependent phosphorylation of N-acetyl-L-glutamate. In Methanoculleus marisnigri (strain ATCC 35101 / DSM 1498 / JR1), this protein is Acetylglutamate kinase.